A 202-amino-acid chain; its full sequence is Small ribosomal subunit protein uS4 (202 aa).

The interval 15-42 (LGDLPGLTRKAAKRSYPPGQHGQARRKR) is disordered. Residues 90-152 (NRLDNVCFRL…KCSKQLAEGN (63 aa)) form the S4 RNA-binding domain.

It belongs to the universal ribosomal protein uS4 family. As to quaternary structure, part of the 30S ribosomal subunit. Contacts protein S5. The interaction surface between S4 and S5 is involved in control of translational fidelity.

Its function is as follows. One of the primary rRNA binding proteins, it binds directly to 16S rRNA where it nucleates assembly of the body of the 30S subunit. Functionally, with S5 and S12 plays an important role in translational accuracy. This is Small ribosomal subunit protein uS4 from Parasynechococcus marenigrum (strain WH8102).